A 149-amino-acid polypeptide reads, in one-letter code: UPF0178 protein SE_0451 (149 aa).

The protein belongs to the UPF0178 family.

In Staphylococcus epidermidis (strain ATCC 12228 / FDA PCI 1200), this protein is UPF0178 protein SE_0451.